The chain runs to 145 residues: LIM domain only protein 3 (145 aa).

LIM zinc-binding domains lie at 11–73 and 75–137; these read KGCA…LFGT and GNCA…GLMK.

The sequence is that of LIM domain only protein 3 (Lmo3) from Rattus norvegicus (Rat).